The sequence spans 338 residues: MKRINLTRYLIEEQREHNTIPAELRLLLEVVARACKAISHSVNKGALAGVLGSAGTGNVQGETQQKLDVIANEVLLEANEYGGNLAAMASEEMESFYEIPHRYPKGEYLLLFDPLDGSSNIDVNVSIGTIFSVLHMPKAGEAVTEADFMQPGSKQVAAGYAVYGPQTTLVLTVGNGVHMFTLDREVGSFVLTHRDVKIPVDTKEFAINMSNMRHWAPPVRRYIDECLAGTEGPRGKDFNMRWIASMVADVHRILTRGGIFMYPWDKREPGKAGKLRLMYEANPMAFLVEQAGGAATNGEQRILDIQPEKLHQRVAVVLGSKNEVDRVTQYHLEAKQTP.

Mg(2+)-binding residues include E91, D113, L115, and D116. Substrate-binding positions include 116–119 (DGSS), N208, and K274. Residue E280 coordinates Mg(2+).

Belongs to the FBPase class 1 family. In terms of assembly, homotetramer. It depends on Mg(2+) as a cofactor.

It localises to the cytoplasm. The enzyme catalyses beta-D-fructose 1,6-bisphosphate + H2O = beta-D-fructose 6-phosphate + phosphate. It functions in the pathway carbohydrate biosynthesis; gluconeogenesis. This chain is Fructose-1,6-bisphosphatase class 1, found in Ralstonia pickettii (strain 12J).